We begin with the raw amino-acid sequence, 226 residues long: PKHD-type hydroxylase mma_3620 (226 aa).

Residues 78-178 form the Fe2OG dioxygenase domain; the sequence is RYMPPLFNRY…RVCSFFWLQS (101 aa). The Fe cation site is built by His96, Asp98, and His159. Residue Arg169 coordinates 2-oxoglutarate.

Requires Fe(2+) as cofactor. L-ascorbate is required as a cofactor.

This is PKHD-type hydroxylase mma_3620 from Janthinobacterium sp. (strain Marseille) (Minibacterium massiliensis).